The following is a 423-amino-acid chain: MSEDHGKDYTLEADSELRFEIEQKDAKVLVSLVSGFAELFGTELVKKKQYEFGMGAKVAIFTYQGCVLHVSGKMDVCYISKETPMVQYVNCHAALEQFRMEAEEKDRHGPVAMVVGPMDVGKSTLCRILLNYAVRVGRRPLYADLDVGQGSIAIAGSVATILIERPANVEEGFAKTAPLVYHFGHKSPSGNSILYNAVVSKMAEVTLHSLNSNKRTKSSGIIVNTCGWVKGSGYAHLLHAAKAYGACAIFVLDQERLYNELLRDVPKGVHVVLLPKSGGVVERSKELRHEARDQRIKEYFYGNARAPFYPFSFEVKFQDLRLYKIGAPPLPDSCMPIGMKAEDNKTKVVAVTPTPALIHHVLALSFAESVEDEVIGTNVAGFCCVTEVDMERQAVMLLSPQPRPLPPNALLLWSELQFMDNHT.

ATP-binding positions include Glu16, Lys57, and 119–124 (DVGKST).

It belongs to the Clp1 family. Clp1 subfamily.

The protein localises to the nucleus. Functionally, required for endonucleolytic cleavage during polyadenylation-dependent pre-mRNA 3'-end formation. This Drosophila yakuba (Fruit fly) protein is Protein CLP1 homolog (cbc).